The following is a 310-amino-acid chain: ADP-L-glycero-D-manno-heptose-6-epimerase (310 aa).

NADP(+) is bound by residues 10-11 (FI), 31-32 (DN), lysine 38, lysine 53, 75-79 (EGACS), and asparagine 92. The Proton acceptor role is filled by tyrosine 140. Lysine 144 contacts NADP(+). Residue asparagine 169 participates in substrate binding. NADP(+) contacts are provided by valine 170 and lysine 178. Lysine 178 acts as the Proton acceptor in catalysis. Substrate contacts are provided by residues serine 180, histidine 187, 201–204 (FEGS), and arginine 209. Lysine 267 is modified (N6-acetyllysine). Residue tyrosine 272 coordinates substrate.

This sequence belongs to the NAD(P)-dependent epimerase/dehydratase family. HldD subfamily. Homopentamer. The cofactor is NADP(+).

It catalyses the reaction ADP-D-glycero-beta-D-manno-heptose = ADP-L-glycero-beta-D-manno-heptose. It participates in nucleotide-sugar biosynthesis; ADP-L-glycero-beta-D-manno-heptose biosynthesis; ADP-L-glycero-beta-D-manno-heptose from D-glycero-beta-D-manno-heptose 7-phosphate: step 4/4. Functionally, catalyzes the interconversion between ADP-D-glycero-beta-D-manno-heptose and ADP-L-glycero-beta-D-manno-heptose via an epimerization at carbon 6 of the heptose. In Escherichia coli (strain SMS-3-5 / SECEC), this protein is ADP-L-glycero-D-manno-heptose-6-epimerase.